A 682-amino-acid chain; its full sequence is Two-component system protein A (682 aa).

Residues 11–41 (SLDDNDNGQQHQDEVQAKHQDQGHTCPSRPS) form a disordered region. A compositionally biased stretch (basic and acidic residues) spans 21 to 32 (HQDEVQAKHQDQ). PAS domains are found at residues 45–105 (LSRI…PILY) and 166–239 (MNET…LREG). Positions 241-292 (IEDEGWRYRRDGSRFWANVLITPIYQFGQHVGFVKVTRDLTERKEAEACMIA) constitute a PAC domain. The Histidine kinase domain maps to 307–530 (NISHEIRTPM…VFWFTAKMGG (224 aa)). Phosphohistidine; by autocatalysis is present on His310. The Response regulatory domain occupies 563–680 (HVLLVEDNIV…QLLRVLWKWF (118 aa)). Residue Asp615 is modified to 4-aspartylphosphate.

Activation probably requires a transfer of a phosphate group between a His in the histidine kinase domain and an Asp of the response regulatory domain.

The protein resides in the cytoplasm. It carries out the reaction ATP + protein L-histidine = ADP + protein N-phospho-L-histidine.. Functionally, may be part of a two-component regulatory system required for formation of conidia on certain growth media. The chain is Two-component system protein A from Emericella nidulans (strain FGSC A4 / ATCC 38163 / CBS 112.46 / NRRL 194 / M139) (Aspergillus nidulans).